Reading from the N-terminus, the 101-residue chain is Ubiquitin-related modifier 1 (101 aa).

1-thioglycine is present on G101. A Glycyl lysine isopeptide (Gly-Lys) (interchain with K-? in acceptor proteins) cross-link involves residue G101.

Belongs to the URM1 family. C-terminal thiocarboxylation occurs in 2 steps, it is first acyl-adenylated (-COAMP) via the hesA/moeB/thiF part of UBA4, then thiocarboxylated (-COSH) via the rhodanese domain of UBA4.

Its subcellular location is the cytoplasm. It participates in tRNA modification; 5-methoxycarbonylmethyl-2-thiouridine-tRNA biosynthesis. In terms of biological role, acts as a sulfur carrier required for 2-thiolation of mcm(5)S(2)U at tRNA wobble positions of cytosolic tRNA(Lys), tRNA(Glu) and tRNA(Gln). Serves as sulfur donor in tRNA 2-thiolation reaction by being thiocarboxylated (-COSH) at its C-terminus by the MOCS3 homolog UBA4. The sulfur is then transferred to tRNA to form 2-thiolation of mcm(5)S(2)U. Prior mcm(5) tRNA modification by the elongator complex is required for 2-thiolation. Also acts as a ubiquitin-like protein (UBL) that is covalently conjugated via an isopeptide bond to lysine residues of target proteins such as AHP1. The thiocarboxylated form serves as substrate for conjugation and oxidative stress specifically induces the formation of UBL-protein conjugates. The chain is Ubiquitin-related modifier 1 from Candida albicans (strain SC5314 / ATCC MYA-2876) (Yeast).